An 84-amino-acid polypeptide reads, in one-letter code: uncharacterized protein (84 aa).

3 helical membrane passes run 4 to 20, 27 to 49, and 59 to 81; these read AYVL…IKYG, VWKA…WIAF, and IGLA…VYVL.

It localises to the cell membrane. This is an uncharacterized protein from Archaeoglobus fulgidus (strain ATCC 49558 / DSM 4304 / JCM 9628 / NBRC 100126 / VC-16).